Reading from the N-terminus, the 106-residue chain is uncharacterized protein (106 aa).

The protein localises to the mitochondrion. This is an uncharacterized protein from Arabidopsis thaliana (Mouse-ear cress).